The chain runs to 138 residues: Transcription antitermination protein NusB (138 aa).

Belongs to the NusB family.

Involved in transcription antitermination. Required for transcription of ribosomal RNA (rRNA) genes. Binds specifically to the boxA antiterminator sequence of the ribosomal RNA (rrn) operons. The polypeptide is Transcription antitermination protein NusB (Blochmanniella floridana).